The sequence spans 494 residues: MKIVLEEIAMATDKEVLIKEFLKALHEDNAAIFAGAGLSAASGFVNWKGLLKEAADELELDIEKETDLISLAQYFFNKNGRQRLSQLVIDNFSAEAQLNENHRILAQLPIDTYWTTNYDRLIEKSLTDVGKNPDVKIKQSDFALLKPKRDAIVYKMHGDIERASETVLIKDEYEMFHENNQLFSIGLKGDLISKTFLFIGYSFEDPDLEYILSRIRVLMGQDGRNHYCFFRKVNRNQYNHLPKEEGDEKFRYDSIKQELKCADLERYHIKPVLVDKYEDITEILQTILQRYCRSKILISGSAVEYKQFVPDHNTAQMFIHTLSREMVKAGFKIASGFGLGVGSAVINGSLDYVYSTNKRKISDYLILRPFPQYATNGLELMDLWDQYRRDFISDVGCAVFIFGNKEVNGKVVDAGGVRKEFDIAVAQGIKVIPVGATGYMSKTLWEETITNYDKYYSDFPALKADFEFIGDASHNHHEIITRIIKIITALRAGR.

The Deacetylase sirtuin-type domain occupies 11–295; that stretch reads ATDKEVLIKE…TILQRYCRSK (285 aa). A30, D119, and H157 together coordinate NAD(+). Catalysis depends on H157, which acts as the Proton acceptor. The interval 296-494 is SLOG (STALD) domain, binds 3'cADPR; it reads ILISGSAVEY…KIITALRAGR (199 aa). 3'cADPR contacts are provided by G300, S301, L339, F370, R388, K405, G416, and E420.

It belongs to the soluble Thoeris ThsA family. As to quaternary structure, homotetramer.

It localises to the cytoplasm. It catalyses the reaction NAD(+) + H2O = ADP-D-ribose + nicotinamide + H(+). With respect to regulation, probably activated by a signal molecule generated by endogenous ThsB1 and/or ThsB2. Can also be activated by the signal generated by ThsB of B.cereus. The activating molecule might be 3' cyclic ADP-D-ribose (3'cADPR). Functionally, probable NAD(+) hydrolyzing component (NADase) of the Thoeris antiviral defense system, composed of ThsA, TIR1 (thsB1) and TIR2 (thsB2). Activated by a signal molecule generated by endogenous TIR1, TIR2 or ThsB from B.cereus. After activation it binds and hydrolyzes NAD(+), leading to cell death and inhibition of phage replication. Expression of Thoeris in B.subtilis (strain BEST7003) confers resistance to phages phi29, phi3T, SPBeta, SBSphi11, SBSphi13, SBSphiJ, SPO1 and SPR but not SBSphiC. The TIR paralogs confer overlapping resistance to different phages. In Cytobacillus dafuensis (Bacillus dafuensis), this protein is NAD(+) hydrolase ThsA.